Consider the following 87-residue polypeptide: Apolipoprotein C-I (87 aa).

The N-terminal stretch at M1–A26 is a signal peptide.

It belongs to the apolipoprotein C1 family.

Its subcellular location is the secreted. Functionally, inhibitor of lipoprotein binding to the low density lipoprotein (LDL) receptor, LDL receptor-related protein, and very low density lipoprotein (VLDL) receptor. Associates with high density lipoproteins (HDL) and the triacylglycerol-rich lipoproteins in the plasma and makes up about 10% of the protein of the VLDL and 2% of that of HDL. Appears to interfere directly with fatty acid uptake and is also the major plasma inhibitor of cholesteryl ester transfer protein (CETP). Binds free fatty acids and reduces their intracellular esterification. Modulates the interaction of APOE with beta-migrating VLDL and inhibits binding of beta-VLDL to the LDL receptor-related protein. This is Apolipoprotein C-I (APOC1) from Pteropus alecto (Black flying fox).